A 312-amino-acid chain; its full sequence is Tyrosine recombinase XerC (312 aa).

One can recognise a Core-binding (CB) domain in the interval 10-101 (PDLQAARESW…GIRSLLRFLE (92 aa)). Residues 122-306 (SLPKPLTASD…DTARLLEIYE (185 aa)) form the Tyr recombinase domain. Catalysis depends on residues arginine 165, lysine 190, histidine 258, arginine 261, and histidine 284. Tyrosine 293 serves as the catalytic O-(3'-phospho-DNA)-tyrosine intermediate.

Belongs to the 'phage' integrase family. XerC subfamily. As to quaternary structure, forms a cyclic heterotetrameric complex composed of two molecules of XerC and two molecules of XerD.

Its subcellular location is the cytoplasm. Site-specific tyrosine recombinase, which acts by catalyzing the cutting and rejoining of the recombining DNA molecules. The XerC-XerD complex is essential to convert dimers of the bacterial chromosome into monomers to permit their segregation at cell division. It also contributes to the segregational stability of plasmids. The sequence is that of Tyrosine recombinase XerC from Mesorhizobium japonicum (strain LMG 29417 / CECT 9101 / MAFF 303099) (Mesorhizobium loti (strain MAFF 303099)).